Consider the following 160-residue polypeptide: Major strawberry allergen Fra a 1-2 (160 aa).

It belongs to the BetVI family. Monomer. Interacts with AP. Highly expressed in ripe red fruits. Expressed in roots and white fruits. Expressed at low levels in open flowers.

Involved in the control of flavonoid biosynthesis in fruits, probably by binding directly to natural flavonoids. Binds the natural flavonoid myricetin with affinities in the low micromolar range. The protein is Major strawberry allergen Fra a 1-2 of Fragaria ananassa (Strawberry).